The chain runs to 130 residues: Early E3B 14.5 kDa protein (130 aa).

The first 19 residues, 1-19 (MKRIVTFVLLIFCALPVLC), serve as a signal peptide directing secretion. The chain crosses the membrane as a helical span at residues 53 to 77 (AWLYAIISVMVFCSTIFALAIYPYL).

The protein belongs to the adenoviridae E3_14 family. Post-translationally, phosphorylated on serine; O-glycosylated, but not N-glycosylated.

It localises to the host membrane. Down-regulates the EGF receptor and prevents cytolysis by TNF. The sequence is that of Early E3B 14.5 kDa protein from Human adenovirus C serotype 6 (HAdV-6).